Here is a 127-residue protein sequence, read N- to C-terminus: MNQTIKVKKKKKTITLGVVHIRASFNNTIVTFTDIQGNTISSASAGGNGFKGARKATPYAAQVTIDKASEKAKECGLKTISIRIGGPGAQRESAMRALFGQNFVVTSILDVSSIAHNGVRPPKRRRV.

The protein belongs to the universal ribosomal protein uS11 family. As to quaternary structure, part of the 30S ribosomal subunit. Interacts with proteins S7 and S18. Binds to IF-3.

Located on the platform of the 30S subunit, it bridges several disparate RNA helices of the 16S rRNA. Forms part of the Shine-Dalgarno cleft in the 70S ribosome. The polypeptide is Small ribosomal subunit protein uS11 (Rickettsia prowazekii (strain Madrid E)).